The sequence spans 240 residues: Orotidine 5'-phosphate decarboxylase (240 aa).

Substrate is bound by residues aspartate 15, lysine 37, 64-73, threonine 127, arginine 188, glutamine 197, glycine 217, and arginine 218; that span reads DLKYHDIPNT. Lysine 66 (proton donor) is an active-site residue.

Belongs to the OMP decarboxylase family. Type 1 subfamily. Homodimer.

The enzyme catalyses orotidine 5'-phosphate + H(+) = UMP + CO2. It participates in pyrimidine metabolism; UMP biosynthesis via de novo pathway; UMP from orotate: step 2/2. In terms of biological role, catalyzes the decarboxylation of orotidine 5'-monophosphate (OMP) to uridine 5'-monophosphate (UMP). This is Orotidine 5'-phosphate decarboxylase from Citrifermentans bemidjiense (strain ATCC BAA-1014 / DSM 16622 / JCM 12645 / Bem) (Geobacter bemidjiensis).